We begin with the raw amino-acid sequence, 593 residues long: Gamma-humulene synthase (593 aa).

The segment covering 1–26 (MAQISESVSPSTDLKSTESSITSNRH) has biased composition (polar residues). The segment at 1 to 34 (MAQISESVSPSTDLKSTESSITSNRHGNMWEDDR) is disordered. Mg(2+) is bound by residues aspartate 343, aspartate 347, aspartate 488, and glutamate 496. A DDXXD motif motif is present at residues 343 to 347 (DDLYD).

It belongs to the terpene synthase family. Tpsd subfamily. Mg(2+) is required as a cofactor. K(+) serves as cofactor.

It is found in the cytoplasm. The catalysed reaction is (2E,6E)-farnesyl diphosphate = gamma-humulene + diphosphate. It catalyses the reaction (2E,6E)-farnesyl diphosphate = sibirene + diphosphate. It carries out the reaction (2E,6E)-farnesyl diphosphate = longifolene + diphosphate. The enzyme catalyses (2E,6E)-farnesyl diphosphate = beta-himachalene + diphosphate. The catalysed reaction is (2E,6E)-farnesyl diphosphate = gamma-himachalene + diphosphate. It catalyses the reaction (2E,6E)-farnesyl diphosphate = alpha-himachalene + diphosphate. It participates in terpene metabolism; oleoresin biosynthesis. In terms of biological role, involved in defensive oleoresin formation in conifers in response to insect attack or other injury. Involved in 52 sesquiterpene (C15) olefins biosynthesis. In Abies grandis (Grand fir), this protein is Gamma-humulene synthase (ag5).